We begin with the raw amino-acid sequence, 486 residues long: Cardiolipin synthase A (486 aa).

The next 2 helical transmembrane spans lie at 3 to 23 and 38 to 58; these read TVYTLVSWLAILGYWLLIAGV and MAWLLIIYILPLVGIIAYLAV. PLD phosphodiesterase domains lie at 219–246 and 399–426; these read MDLRQHRKMIMIDNYIAYTGSMNMVDPR and EGGLLHTKSVLVDGELSLVGTVNLDMRS. Residues histidine 224, lysine 226, aspartate 231, histidine 404, lysine 406, and aspartate 411 contribute to the active site.

It belongs to the phospholipase D family. Cardiolipin synthase subfamily. ClsA sub-subfamily.

It localises to the cell inner membrane. The enzyme catalyses 2 a 1,2-diacyl-sn-glycero-3-phospho-(1'-sn-glycerol) = a cardiolipin + glycerol. Functionally, catalyzes the reversible phosphatidyl group transfer from one phosphatidylglycerol molecule to another to form cardiolipin (CL) (diphosphatidylglycerol) and glycerol. In Shigella boydii serotype 4 (strain Sb227), this protein is Cardiolipin synthase A.